The primary structure comprises 562 residues: Membrane protein insertase YidC (562 aa).

Residues 4–24 traverse the membrane as a helical segment; the sequence is QRIFLFLALSILGLLLWTSWE. Residues 33–71 form a disordered region; the sequence is TEEVVEAEDDVPAPAETPDEAPDPADGETPARDRAEVED. Residues 35-58 are compositionally biased toward acidic residues; the sequence is EVVEAEDDVPAPAETPDEAPDPAD. A compositionally biased stretch (basic and acidic residues) spans 61–71; the sequence is TPARDRAEVED. Transmembrane regions (helical) follow at residues 330–350, 356–376, 426–446, and 499–519; these read MTLS…FWLL, IVGN…LAFY, LGGC…YWVL, and IMMA…AGLV.

The protein belongs to the OXA1/ALB3/YidC family. Type 1 subfamily. Interacts with the Sec translocase complex via SecD. Specifically interacts with transmembrane segments of nascent integral membrane proteins during membrane integration.

Its subcellular location is the cell inner membrane. Its function is as follows. Required for the insertion and/or proper folding and/or complex formation of integral membrane proteins into the membrane. Involved in integration of membrane proteins that insert both dependently and independently of the Sec translocase complex, as well as at least some lipoproteins. Aids folding of multispanning membrane proteins. This chain is Membrane protein insertase YidC, found in Alkalilimnicola ehrlichii (strain ATCC BAA-1101 / DSM 17681 / MLHE-1).